The sequence spans 208 residues: Coiled-coil domain-containing protein 25 (208 aa).

Topologically, residues 1–105 (MVFYFTSSSV…SNLKKTADMD (105 aa)) are extracellular. Residues 21-25 (KDKYE) form a DNA-binding region. The residue at position 23 (lysine 23) is an N6-acetyllysine. The helical transmembrane segment at 106–122 (VGQIGFHRQKDVKIVTV) threads the bilayer. The stretch at 117 to 187 (VKIVTVEKKV…REMDELRSYS (71 aa)) forms a coiled coil. Over 123 to 208 (EKKVNEILNR…QDGNDSDEFM (86 aa)) the chain is Cytoplasmic. A compositionally biased stretch (basic and acidic residues) spans 144 to 184 (LAAEKEGRDREERNEKKAQIQEMKRKEKEEMKKKREMDELR). A disordered region spans residues 144–208 (LAAEKEGRDR…QDGNDSDEFM (65 aa)). The residue at position 204 (serine 204) is a Phosphoserine.

It belongs to the CCDC25 family. As to quaternary structure, interacts (via cytoplasmic region) with ILK.

Its subcellular location is the cell membrane. The protein localises to the endomembrane system. In terms of biological role, transmembrane receptor that senses neutrophil extracellular traps (NETs) and triggers the ILK-PARVB pathway to enhance cell motility. NETs are mainly composed of DNA fibers and are released by neutrophils to bind pathogens during inflammation. Formation of NETs is also associated with cancer metastasis, NET-DNA acting as a chemotactic factor to attract cancer cells. Specifically binds NETs on its extracellular region, in particular the 8-OHdG-enriched DNA present in NETs, and recruits ILK, initiating the ILK-PARVB cascade to induce cytoskeleton rearrangement and directional migration of cells. In the context of cancer, promotes cancer metastasis by sensing NETs and promoting migration of tumor cells. The polypeptide is Coiled-coil domain-containing protein 25 (Mus musculus (Mouse)).